Here is a 264-residue protein sequence, read N- to C-terminus: Nicotinamide N-methyltransferase (264 aa).

Arg-18 bears the Citrulline; alternate mark. Residues Tyr-20, Tyr-25, Gly-63, Tyr-69, Asp-85, Thr-87, and Asn-90 each contribute to the S-adenosyl-L-methionine site. Arg-132 carries the citrulline; alternate modification. S-adenosyl-L-methionine contacts are provided by residues 142–143 (DV) and Thr-163. Arg-181 carries the post-translational modification Citrulline; alternate. Nicotinamide-binding residues include Asp-197 and Ser-213.

Belongs to the class I-like SAM-binding methyltransferase superfamily. NNMT/PNMT/TEMT family. In terms of assembly, monomer. Post-translationally, deiminated by PADI1 and PADI2. In terms of tissue distribution, expressed in white adipose tissue and liver (at protein level).

Its subcellular location is the cytoplasm. It catalyses the reaction nicotinamide + S-adenosyl-L-methionine = 1-methylnicotinamide + S-adenosyl-L-homocysteine. It functions in the pathway cofactor metabolism. It participates in amino-acid degradation. Inhibited by 6-methoxynicotinamide (JBSNF-000088). Its function is as follows. Catalyzes the N-methylation of nicotinamide using the universal methyl donor S-adenosyl-L-methionine to form N1-methylnicotinamide and S-adenosyl-L-homocysteine, a predominant nicotinamide/vitamin B3 clearance pathway. Plays a central role in regulating cellular methylation potential, by consuming S-adenosyl-L-methionine and limiting its availability for other methyltransferases. Actively mediates genome-wide epigenetic and transcriptional changes through hypomethylation of repressive chromatin marks, such as H3K27me3. In a developmental context, contributes to low levels of the repressive histone marks that characterize pluripotent embryonic stem cell pre-implantation state. Acts as a metabolic regulator primarily on white adipose tissue energy expenditure as well as hepatic gluconeogenesis and cholesterol biosynthesis. In white adipocytes, regulates polyamine flux by consuming S-adenosyl-L-methionine which provides for propylamine group in polyamine biosynthesis, whereas by consuming nicotinamide controls NAD(+) levels through the salvage pathway. Via its product N1-methylnicotinamide regulates protein acetylation in hepatocytes, by repressing the ubiquitination and increasing the stability of SIRT1 deacetylase. Can also N-methylate other pyridines structurally related to nicotinamide and play a role in xenobiotic detoxification. In Mus musculus (Mouse), this protein is Nicotinamide N-methyltransferase (Nnmt).